The chain runs to 423 residues: Histidine--tRNA ligase (423 aa).

Belongs to the class-II aminoacyl-tRNA synthetase family. As to quaternary structure, homodimer.

Its subcellular location is the cytoplasm. The enzyme catalyses tRNA(His) + L-histidine + ATP = L-histidyl-tRNA(His) + AMP + diphosphate + H(+). This Corynebacterium diphtheriae (strain ATCC 700971 / NCTC 13129 / Biotype gravis) protein is Histidine--tRNA ligase.